We begin with the raw amino-acid sequence, 167 residues long: Protein FAM163B (167 aa).

A helical transmembrane segment spans residues 6 to 26; that stretch reads VVITGGILATVILLCIIAVLC. Phosphoserine is present on serine 40.

Belongs to the FAM163 family.

The protein localises to the membrane. The sequence is that of Protein FAM163B (Fam163b) from Mus musculus (Mouse).